We begin with the raw amino-acid sequence, 262 residues long: Global transcriptional regulator CodY (262 aa).

The interval 1 to 159 (MAHLLEKTRK…SSTVVGIQLL (159 aa)) is GAF domain. Residues 207 to 226 (ASVIADRIGITRSVIVNALR) constitute a DNA-binding region (H-T-H motif).

The protein belongs to the CodY family.

It is found in the cytoplasm. Its function is as follows. DNA-binding global transcriptional regulator which is involved in the adaptive response to starvation and acts by directly or indirectly controlling the expression of numerous genes in response to nutrient availability. During rapid exponential growth, CodY is highly active and represses genes whose products allow adaptation to nutrient depletion. This is Global transcriptional regulator CodY from Streptococcus gordonii (strain Challis / ATCC 35105 / BCRC 15272 / CH1 / DL1 / V288).